The chain runs to 245 residues: UPF0246 protein Ldb2075 (245 aa).

It belongs to the UPF0246 family.

The sequence is that of UPF0246 protein Ldb2075 from Lactobacillus delbrueckii subsp. bulgaricus (strain ATCC 11842 / DSM 20081 / BCRC 10696 / JCM 1002 / NBRC 13953 / NCIMB 11778 / NCTC 12712 / WDCM 00102 / Lb 14).